A 178-amino-acid polypeptide reads, in one-letter code: ATP synthase subunit delta (178 aa).

It belongs to the ATPase delta chain family. In terms of assembly, F-type ATPases have 2 components, F(1) - the catalytic core - and F(0) - the membrane proton channel. F(1) has five subunits: alpha(3), beta(3), gamma(1), delta(1), epsilon(1). F(0) has three main subunits: a(1), b(2) and c(10-14). The alpha and beta chains form an alternating ring which encloses part of the gamma chain. F(1) is attached to F(0) by a central stalk formed by the gamma and epsilon chains, while a peripheral stalk is formed by the delta and b chains.

The protein resides in the cell inner membrane. F(1)F(0) ATP synthase produces ATP from ADP in the presence of a proton or sodium gradient. F-type ATPases consist of two structural domains, F(1) containing the extramembraneous catalytic core and F(0) containing the membrane proton channel, linked together by a central stalk and a peripheral stalk. During catalysis, ATP synthesis in the catalytic domain of F(1) is coupled via a rotary mechanism of the central stalk subunits to proton translocation. Its function is as follows. This protein is part of the stalk that links CF(0) to CF(1). It either transmits conformational changes from CF(0) to CF(1) or is implicated in proton conduction. The protein is ATP synthase subunit delta of Pseudomonas fluorescens (strain Pf0-1).